Consider the following 449-residue polypeptide: Phosphoglucosamine mutase (449 aa).

S99 serves as the catalytic Phosphoserine intermediate. Mg(2+) is bound by residues S99, D239, D241, and D243. S99 carries the phosphoserine modification.

The protein belongs to the phosphohexose mutase family. It depends on Mg(2+) as a cofactor. Post-translationally, activated by phosphorylation.

The catalysed reaction is alpha-D-glucosamine 1-phosphate = D-glucosamine 6-phosphate. Its function is as follows. Catalyzes the conversion of glucosamine-6-phosphate to glucosamine-1-phosphate. This Finegoldia magna (strain ATCC 29328 / DSM 20472 / WAL 2508) (Peptostreptococcus magnus) protein is Phosphoglucosamine mutase.